Here is a 439-residue protein sequence, read N- to C-terminus: tRNA modification GTPase MnmE (439 aa).

(6S)-5-formyl-5,6,7,8-tetrahydrofolate contacts are provided by Arg-20, Glu-78, and Lys-116. A TrmE-type G domain is found at Gly-211–Glu-364. Residues Asn-221–Thr-226, Ser-240–Thr-246, and Asp-265–Gly-268 each bind GTP. Ser-225 and Thr-246 together coordinate Mg(2+). Lys-439 contacts (6S)-5-formyl-5,6,7,8-tetrahydrofolate.

It belongs to the TRAFAC class TrmE-Era-EngA-EngB-Septin-like GTPase superfamily. TrmE GTPase family. As to quaternary structure, homodimer. Heterotetramer of two MnmE and two MnmG subunits. Requires K(+) as cofactor.

Its subcellular location is the cytoplasm. Functionally, exhibits a very high intrinsic GTPase hydrolysis rate. Involved in the addition of a carboxymethylaminomethyl (cmnm) group at the wobble position (U34) of certain tRNAs, forming tRNA-cmnm(5)s(2)U34. This chain is tRNA modification GTPase MnmE, found in Ehrlichia chaffeensis (strain ATCC CRL-10679 / Arkansas).